Consider the following 375-residue polypeptide: Succinyl-diaminopimelate desuccinylase (375 aa).

Histidine 66 serves as a coordination point for Zn(2+). Aspartate 68 is a catalytic residue. Zn(2+) is bound at residue aspartate 99. Glutamate 133 functions as the Proton acceptor in the catalytic mechanism. The Zn(2+) site is built by glutamate 134, glutamate 162, and histidine 348.

It belongs to the peptidase M20A family. DapE subfamily. Homodimer. Zn(2+) is required as a cofactor. The cofactor is Co(2+).

The catalysed reaction is N-succinyl-(2S,6S)-2,6-diaminopimelate + H2O = (2S,6S)-2,6-diaminopimelate + succinate. Its pathway is amino-acid biosynthesis; L-lysine biosynthesis via DAP pathway; LL-2,6-diaminopimelate from (S)-tetrahydrodipicolinate (succinylase route): step 3/3. Its function is as follows. Catalyzes the hydrolysis of N-succinyl-L,L-diaminopimelic acid (SDAP), forming succinate and LL-2,6-diaminopimelate (DAP), an intermediate involved in the bacterial biosynthesis of lysine and meso-diaminopimelic acid, an essential component of bacterial cell walls. This Escherichia coli O157:H7 protein is Succinyl-diaminopimelate desuccinylase.